The chain runs to 817 residues: MQQQYPFRDIEQQAQQYWESNATFTATEVSDKPKYYCLSMFPYPSGKLHMGHVRNYTIGDVLSRFHRMRGYNVMQPMGWDAFGLPAENAAIKHNVAPAGWTYSNIEHMKGQLKSLGLAVDWQREIATCKPDYYRWEQWLFTELYKKGLIYKKTATVNWDPVDQTVLANEQVIDGRGWRSGALVEKRDIPQYFMKITAYAEELLADLDKLDGWPEQVKTMQRNWIGKSYGCEVEFPLAVGNGTLKVYTTRPDTLMGATYVAIAAEHALATQAAKDNPALQAFIEECKRGSVAEADLATAEKKGMNSGLFVLHPITGEKLPVWVANYVLISYGEGAVMAVPAHDERDFEFASKYKLPIKAVIKPAHGELELPLQAAYTEHGILFDSGDFNGLDFSQASDAIAAALAAKNLGKRRTQYRLRDWGISRQRYWGCPIPIVHCPSCGEVPVPAEQLPVVLPEDVVMDGVGSPIKKDPAFYETTCPSCGEKATRETDTMDTFVESSWYFARYASFDAHSSMVDERANYWLPVDQYIGGIEHAILHLLYARFFNKLMRDVGLVRHDEPFTKLLTQGMVLKDGSKMSKSKGNTVDPQELIDNYGADTARLFMMFAAPPEQSLEWSDAGVEGAHRFLKRVWTAVANHVESGIVAAFTMGDLSAELKAFRRQLHQTIEKVTDDYGRRHAFNTAIAAVMELMNAYAKIEGHDATTRAIRQEALENIILLLSPIVPHICHALWQALRPGTQLLDTRWPVANKAAMVQDEIELVLQVNGKLRGSMTVSRTLDKAAIEALAVQQECIQKYLAEGSVRKIIVVPNKLVNIVVG.

The 'HIGH' region signature appears at 42–52; that stretch reads PYPSGKLHMGH. Residues 576-580 carry the 'KMSKS' region motif; sequence KMSKS. K579 is a binding site for ATP.

The protein belongs to the class-I aminoacyl-tRNA synthetase family.

The protein localises to the cytoplasm. It catalyses the reaction tRNA(Leu) + L-leucine + ATP = L-leucyl-tRNA(Leu) + AMP + diphosphate. This is Leucine--tRNA ligase from Methylobacillus flagellatus (strain ATCC 51484 / DSM 6875 / VKM B-1610 / KT).